The following is a 494-amino-acid chain: UDP-N-acetylmuramate--L-alanine ligase (494 aa).

Position 134-140 (134-140) interacts with ATP; the sequence is GSHGKTT.

This sequence belongs to the MurCDEF family.

The protein resides in the cytoplasm. It carries out the reaction UDP-N-acetyl-alpha-D-muramate + L-alanine + ATP = UDP-N-acetyl-alpha-D-muramoyl-L-alanine + ADP + phosphate + H(+). It participates in cell wall biogenesis; peptidoglycan biosynthesis. Its function is as follows. Cell wall formation. This chain is UDP-N-acetylmuramate--L-alanine ligase, found in Prochlorococcus marinus (strain NATL1A).